Here is a 419-residue protein sequence, read N- to C-terminus: Cyclin-B2-2 (419 aa).

Residues 79–116 (QPSSAPLAPIGSERQKRTADSAFHGPADMECTKITSDD) form a disordered region.

Belongs to the cyclin family. Cyclin AB subfamily. As to quaternary structure, interacts with CDKB2-1. Expressed in the intercalary meristem and the elongation zone of internodes. Expressed in adventitious roots at all nodes under submergence conditions.

It localises to the nucleus. Its function is as follows. Involved in the control of the cell cycle at the G2/M (mitosis) transition. May associate to CDKB2-1 and activate CDKB2-1 kinase to promote cell division. The protein is Cyclin-B2-2 (CYCB2-2) of Oryza sativa subsp. indica (Rice).